Here is a 350-residue protein sequence, read N- to C-terminus: Farnesyl pyrophosphate synthase (350 aa).

Isopentenyl diphosphate-binding residues include Lys-55, Arg-58, and Gln-94. Asp-101 and Asp-105 together coordinate Mg(2+). Position 110 (Arg-110) interacts with dimethylallyl diphosphate. Residue Arg-111 participates in isopentenyl diphosphate binding. Residues Lys-198, Thr-199, Gln-237, Lys-254, and Lys-263 each coordinate dimethylallyl diphosphate.

It belongs to the FPP/GGPP synthase family. Mg(2+) serves as cofactor.

The protein localises to the cytoplasm. It catalyses the reaction isopentenyl diphosphate + dimethylallyl diphosphate = (2E)-geranyl diphosphate + diphosphate. The enzyme catalyses isopentenyl diphosphate + (2E)-geranyl diphosphate = (2E,6E)-farnesyl diphosphate + diphosphate. Its pathway is isoprenoid biosynthesis; farnesyl diphosphate biosynthesis; farnesyl diphosphate from geranyl diphosphate and isopentenyl diphosphate: step 1/1. The protein operates within isoprenoid biosynthesis; geranyl diphosphate biosynthesis; geranyl diphosphate from dimethylallyl diphosphate and isopentenyl diphosphate: step 1/1. Its function is as follows. Catalyzes the sequential condensation of isopentenyl pyrophosphate with the allylic pyrophosphates, dimethylallyl pyrophosphate, and then with the resultant geranylpyrophosphate to the ultimate product farnesyl pyrophosphate. The chain is Farnesyl pyrophosphate synthase (FPS) from Zea mays (Maize).